The sequence spans 145 residues: Photosystem I reaction center subunit XI (145 aa).

3 consecutive transmembrane segments (helical) span residues 48 to 68, 75 to 95, and 125 to 145; these read LEIGMAHGYFLIGPFYILGPL, LLVGLFSAFGLILILTLGLTI, and IGAFGGASVAYVLLDNISFFA.

It belongs to the PsaL family.

It localises to the plastid. The protein localises to the chloroplast thylakoid membrane. In Emiliania huxleyi (Coccolithophore), this protein is Photosystem I reaction center subunit XI.